Consider the following 504-residue polypeptide: L-carnitine/gamma-butyrobetaine antiporter (504 aa).

12 consecutive transmembrane segments (helical) span residues 10–30, 51–71, 92–112, 143–163, 195–215, 231–251, 263–283, 316–336, 347–367, 398–418, 446–466, and 475–495; these read IEPKVFFPPLIIVGILCWLTV, WGWAFEWYMVVMLFGWFWLVF, IFMMFASCTSAAVLFWGSIEI, GPLPWATYSFLSVAFAYFFFV, FYLVALIFAMGTSLGLATPLV, LDAIIITCWIILNAICVACGL, SYLSFLMLGWVFIVSGASFIM, WTVFYWAWWVIYAIQMSIFLA, LCFGMVLGLTASTWILWTVLG, WAALPLSTATIWGFFILCFIA, LLVRIGWSILVGIIGIVLLAL, and AIIAGGCPLFFVNIMVTLSFI.

Belongs to the BCCT transporter (TC 2.A.15) family. CaiT subfamily. In terms of assembly, homotrimer.

The protein resides in the cell inner membrane. The catalysed reaction is 4-(trimethylamino)butanoate(in) + (R)-carnitine(out) = 4-(trimethylamino)butanoate(out) + (R)-carnitine(in). The protein operates within amine and polyamine metabolism; carnitine metabolism. Its function is as follows. Catalyzes the exchange of L-carnitine for gamma-butyrobetaine. This chain is L-carnitine/gamma-butyrobetaine antiporter, found in Escherichia coli O8 (strain IAI1).